The sequence spans 340 residues: Protein RecA (340 aa).

65–72 contributes to the ATP binding site; the sequence is GPESGGKT.

The protein belongs to the RecA family.

It localises to the cytoplasm. Functionally, can catalyze the hydrolysis of ATP in the presence of single-stranded DNA, the ATP-dependent uptake of single-stranded DNA by duplex DNA, and the ATP-dependent hybridization of homologous single-stranded DNAs. It interacts with LexA causing its activation and leading to its autocatalytic cleavage. The protein is Protein RecA of Thermus thermophilus (strain ATCC BAA-163 / DSM 7039 / HB27).